The primary structure comprises 64 residues: Prokaryotic ubiquitin-like protein Pup (64 aa).

The segment at 1-36 is disordered; sequence MAQEQTKRGGGGGDDEDVTGTTAAGQERRKKLAQDT. Positions 21–58 are ARC ATPase binding; it reads TTAAGQERRKKLAQDTDDLLDEIDDVLEENAEDFVRAY. Residues 26–52 adopt a coiled-coil conformation; the sequence is QERRKKLAQDTDDLLDEIDDVLEENAE. Glutamine 64 carries the post-translational modification Deamidated glutamine. An Isoglutamyl lysine isopeptide (Gln-Lys) (interchain with K-? in acceptor proteins) cross-link involves residue glutamine 64.

It belongs to the prokaryotic ubiquitin-like protein family. As to quaternary structure, strongly interacts with the proteasome-associated ATPase ARC through a hydrophobic interface; the interacting region of Pup lies in its C-terminal half. There is one Pup binding site per ARC hexamer ring. Post-translationally, is modified by deamidation of its C-terminal glutamine to glutamate by the deamidase Dop, a prerequisite to the subsequent pupylation process.

It participates in protein degradation; proteasomal Pup-dependent pathway. In terms of biological role, protein modifier that is covalently attached to lysine residues of substrate proteins, thereby targeting them for proteasomal degradation. The tagging system is termed pupylation. This Mycobacterium ulcerans (strain Agy99) protein is Prokaryotic ubiquitin-like protein Pup.